The primary structure comprises 182 residues: Adenine phosphoribosyltransferase 4 (182 aa).

The protein belongs to the purine/pyrimidine phosphoribosyltransferase family. Homodimer.

Its subcellular location is the cytoplasm. It catalyses the reaction AMP + diphosphate = 5-phospho-alpha-D-ribose 1-diphosphate + adenine. Its pathway is purine metabolism; AMP biosynthesis via salvage pathway; AMP from adenine: step 1/1. Its function is as follows. Catalyzes a salvage reaction resulting in the formation of AMP, that is energically less costly than de novo synthesis. May contribute to the recycling of adenine into adenylate nucleotides and the inactivation of cytokinins by phosphoribosylation. Possesses low activity toward adenine, but can efficiently convert cytokinins from free bases (active form) to the corresponding nucleotides (inactive form). The polypeptide is Adenine phosphoribosyltransferase 4 (APT4) (Arabidopsis thaliana (Mouse-ear cress)).